Consider the following 37-residue polypeptide: Large ribosomal subunit protein bL36 (37 aa).

Positions 11, 14, 27, and 32 each coordinate Zn(2+).

It belongs to the bacterial ribosomal protein bL36 family. Part of the 50S ribosomal subunit. Zn(2+) serves as cofactor.

Binds the 23S rRNA. This Deinococcus radiodurans (strain ATCC 13939 / DSM 20539 / JCM 16871 / CCUG 27074 / LMG 4051 / NBRC 15346 / NCIMB 9279 / VKM B-1422 / R1) protein is Large ribosomal subunit protein bL36 (rpmJ).